Reading from the N-terminus, the 722-residue chain is MAAPSLLNWRRVSSFTGPVPRARHGHRAVAIRELMIIFGGGNEGIADELHVYNTVTNQWFLPAVRGDIPPGCAAHGFVCDGTRILVFGGMVEYGRYSNELYELQASRWLWKKVKPQPPPSGFPPCPRLGHSFSLYGNKCYLFGGLANESEDSNNNVPRYLNDFYELELQHGSGVVGWSIPATKGVVPSPRESHTAIIYCKKDSASPKMYVFGGMCGARLDDLWQLDLETMSWSKPETKGTVPLPRSLHTASVIGNKMYIFGGWVPHKGENPETSPHDCEWRCTSSFSYLNLDTAEWTTLVSDSQEDKKNSRPRPRAGHCAVAIGTRLYFWSGRDGYKKALNSQVCCKDLWYLDTEKPPAPSQVQLIKATTNSFHVKWDEVPTVEGYLLQLNTDLTYQATSSDSSAAPSVLGGRMDPHRQGSNSTLHNSVSDTVNSTKTEHTAVRGTSLRSKPDSRAVDSSAALHSPLAPNTSNNSSWVTDMLRKNEVDEICALPATKISRVEVHAAATPFSKETPSNPVAILKAEQWCDVGIFKNNTALVSQFYLLPKGKQSMSKVGNADVPDYSLLKKQDLVPGTVYKFRVAAINGCGIGPLSKVSEFKTCTPGFPGAPSTVRISKNVDGIHLSWEPPTSPSGNILEYSAYLAIRTAQMQDNPSQLVFMRIYCGLKTSCTVTAGQLANAHIDYTSRPAIVFRISAKNEKGYGPATQVRWLQDQEKDVGPWF.

4 Kelch repeats span residues 34 to 79 (LMII…GFVC), 83 to 130 (RILV…RLGH), 207 to 255 (KMYV…VIGN), and 257 to 303 (MYIF…VSDS). Fibronectin type-III domains are found at residues 359 to 460 (APSQ…VDSS), 514 to 604 (TPSN…TCTP), and 606 to 716 (FPGA…DQEK). Positions 398–476 (ATSSDSSAAP…LAPNTSNNSS (79 aa)) are disordered. Residues 419-436 (QGSNSTLHNSVSDTVNST) are compositionally biased toward polar residues.

As to quaternary structure, binds KMT2A/MLL1. Component of the MLL1/MLL complex, at least composed of KMT2A/MLL1, ASH2L, RBBP5, DPY30, WDR5, MEN1, HCFC1 and HCFC2. Interacts with TASOR. In terms of tissue distribution, expressed in the spermatogonia, spermatocytes and ovary.

The protein localises to the cytoplasm. Its subcellular location is the nucleus. This chain is Host cell factor 2 (Hcfc2), found in Mus musculus (Mouse).